Reading from the N-terminus, the 357-residue chain is Beta-hexosaminidase (357 aa).

Substrate contacts are provided by residues aspartate 72, arginine 80, arginine 146, and 176–177 (KH). Catalysis depends on histidine 189, which acts as the Proton donor/acceptor. Aspartate 260 functions as the Nucleophile in the catalytic mechanism.

The protein belongs to the glycosyl hydrolase 3 family. NagZ subfamily.

The protein localises to the cytoplasm. The catalysed reaction is Hydrolysis of terminal non-reducing N-acetyl-D-hexosamine residues in N-acetyl-beta-D-hexosaminides.. The protein operates within cell wall biogenesis; peptidoglycan recycling. Its function is as follows. Plays a role in peptidoglycan recycling by cleaving the terminal beta-1,4-linked N-acetylglucosamine (GlcNAc) from peptide-linked peptidoglycan fragments, giving rise to free GlcNAc, anhydro-N-acetylmuramic acid and anhydro-N-acetylmuramic acid-linked peptides. This is Beta-hexosaminidase from Hydrogenovibrio crunogenus (strain DSM 25203 / XCL-2) (Thiomicrospira crunogena).